The primary structure comprises 297 residues: N-acetylneuraminate lyase (297 aa).

Aceneuramate-binding residues include serine 47 and threonine 48. Catalysis depends on tyrosine 137, which acts as the Proton donor. The active-site Schiff-base intermediate with substrate is the lysine 165. Positions 167, 189, 191, 192, and 208 each coordinate aceneuramate.

This sequence belongs to the DapA family. NanA subfamily. As to quaternary structure, homotetramer.

The protein localises to the cytoplasm. The enzyme catalyses aceneuramate = aldehydo-N-acetyl-D-mannosamine + pyruvate. It participates in amino-sugar metabolism; N-acetylneuraminate degradation; D-fructose 6-phosphate from N-acetylneuraminate: step 1/5. Functionally, catalyzes the reversible aldol cleavage of N-acetylneuraminic acid (sialic acid; Neu5Ac) to form pyruvate and N-acetylmannosamine (ManNAc) via a Schiff base intermediate. This Salmonella agona (strain SL483) protein is N-acetylneuraminate lyase.